Here is a 388-residue protein sequence, read N- to C-terminus: Succinate--CoA ligase [ADP-forming] subunit beta (388 aa).

In terms of domain architecture, ATP-grasp spans 9–244 (KALFAEYGLP…PSQDDAREAH (236 aa)). ATP contacts are provided by residues Lys46, 53–55 (GRG), Glu99, Thr102, and Glu107. Residues Asn199 and Asp213 each coordinate Mg(2+). Residues Asn264 and 321-323 (GIV) each bind substrate.

It belongs to the succinate/malate CoA ligase beta subunit family. Heterotetramer of two alpha and two beta subunits. The cofactor is Mg(2+).

It catalyses the reaction succinate + ATP + CoA = succinyl-CoA + ADP + phosphate. It carries out the reaction GTP + succinate + CoA = succinyl-CoA + GDP + phosphate. Its pathway is carbohydrate metabolism; tricarboxylic acid cycle; succinate from succinyl-CoA (ligase route): step 1/1. Succinyl-CoA synthetase functions in the citric acid cycle (TCA), coupling the hydrolysis of succinyl-CoA to the synthesis of either ATP or GTP and thus represents the only step of substrate-level phosphorylation in the TCA. The beta subunit provides nucleotide specificity of the enzyme and binds the substrate succinate, while the binding sites for coenzyme A and phosphate are found in the alpha subunit. The protein is Succinate--CoA ligase [ADP-forming] subunit beta of Shewanella pealeana (strain ATCC 700345 / ANG-SQ1).